The sequence spans 261 residues: CD40 ligand (261 aa).

Residues 1 to 22 lie on the Cytoplasmic side of the membrane; that stretch reads MIETYSQPSPRSVATGPPVSMK. A helical; Signal-anchor for type II membrane protein transmembrane segment spans residues 23–46; the sequence is IFMYLLTVFLITQMIGSALFAVYL. Over 47–261 the chain is Extracellular; sequence HRRLDKIEDE…GFTSFGLLKL (215 aa). In terms of domain architecture, THD spans 122–261; it reads IAAHVISEAS…GFTSFGLLKL (140 aa). Cys178 and Cys218 are joined by a disulfide. Asn240 is a glycosylation site (N-linked (GlcNAc...) asparagine).

This sequence belongs to the tumor necrosis factor family. Homotrimer. Interacts with CD28. CD40 ligand, soluble form: Exists as either a monomer or a homotrimer. Forms a ternary complex between CD40 and integrins for CD40-CD40LG signaling. In terms of processing, the soluble form derives from the membrane form by proteolytic processing.

The protein resides in the cell membrane. Its subcellular location is the cell surface. The protein localises to the secreted. In terms of biological role, cytokine that acts as a ligand to CD40/TNFRSF5. Costimulates T-cell proliferation and cytokine production. Its cross-linking on T-cells generates a costimulatory signal which enhances the production of IL4 and IL10 in conjunction with the TCR/CD3 ligation and CD28 costimulation. Induces the activation of NF-kappa-B. Induces the activation of kinases MAPK8 and PAK2 in T-cells. Mediates B-cell proliferation in the absence of co-stimulus as well as IgE production in the presence of IL4. Involved in immunoglobulin class switching. Its function is as follows. Acts as a ligand for integrins, specifically ITGA5:ITGB1 and ITGAV:ITGB3; both integrins and the CD40 receptor are required for activation of CD40-CD40LG signaling, which have cell-type dependent effects, such as B-cell activation, NF-kappa-B signaling and anti-apoptotic signaling. This is CD40 ligand (CD40LG) from Bos taurus (Bovine).